The primary structure comprises 185 residues: Crossover junction endodeoxyribonuclease RuvC (185 aa).

Residues Asp-7, Glu-66, and Asp-137 contribute to the active site. Residues Asp-7, Glu-66, and Asp-137 each contribute to the Mg(2+) site.

The protein belongs to the RuvC family. Homodimer which binds Holliday junction (HJ) DNA. The HJ becomes 2-fold symmetrical on binding to RuvC with unstacked arms; it has a different conformation from HJ DNA in complex with RuvA. In the full resolvosome a probable DNA-RuvA(4)-RuvB(12)-RuvC(2) complex forms which resolves the HJ. It depends on Mg(2+) as a cofactor.

Its subcellular location is the cytoplasm. The catalysed reaction is Endonucleolytic cleavage at a junction such as a reciprocal single-stranded crossover between two homologous DNA duplexes (Holliday junction).. In terms of biological role, the RuvA-RuvB-RuvC complex processes Holliday junction (HJ) DNA during genetic recombination and DNA repair. Endonuclease that resolves HJ intermediates. Cleaves cruciform DNA by making single-stranded nicks across the HJ at symmetrical positions within the homologous arms, yielding a 5'-phosphate and a 3'-hydroxyl group; requires a central core of homology in the junction. The consensus cleavage sequence is 5'-(A/T)TT(C/G)-3'. Cleavage occurs on the 3'-side of the TT dinucleotide at the point of strand exchange. HJ branch migration catalyzed by RuvA-RuvB allows RuvC to scan DNA until it finds its consensus sequence, where it cleaves and resolves the cruciform DNA. This Anaeromyxobacter sp. (strain K) protein is Crossover junction endodeoxyribonuclease RuvC.